The chain runs to 141 residues: MAKKVLGFIKLQIPAGAANPAPPVGPALGQKGVNIMEFCKQFNAKTQSEAGMIIPVVITVYSDKSFTFITKTPPAAVLLLKEASLKKGSGEPNRNKVGTVTRDQVRKIAELKMPDLNAVNSEGAEEMIMGTARSMGIVVEG.

This sequence belongs to the universal ribosomal protein uL11 family. As to quaternary structure, part of the ribosomal stalk of the 50S ribosomal subunit. Interacts with L10 and the large rRNA to form the base of the stalk. L10 forms an elongated spine to which L12 dimers bind in a sequential fashion forming a multimeric L10(L12)X complex. In terms of processing, one or more lysine residues are methylated.

In terms of biological role, forms part of the ribosomal stalk which helps the ribosome interact with GTP-bound translation factors. The polypeptide is Large ribosomal subunit protein uL11 (Pelodictyon phaeoclathratiforme (strain DSM 5477 / BU-1)).